The primary structure comprises 321 residues: Sialic acid-binding periplasmic protein SiaP (321 aa).

A signal peptide spans 1-22; the sequence is MKTINKITIAILTLSAAASVNA.

The protein belongs to the bacterial solute-binding protein 7 family. As to quaternary structure, the complex comprises the extracytoplasmic solute receptor protein SiaP, and the two transmembrane proteins SiaQ and SiaM.

It is found in the periplasm. In terms of biological role, part of the tripartite ATP-independent periplasmic (TRAP) transport system SiaPQM that catalyzes unidirectional Na(+)-dependent sialic acid uptake. Binds the common sialic acid N-acetylneuraminic acid (Neu5Ac) with a high affinity. The chain is Sialic acid-binding periplasmic protein SiaP from Vibrio cholerae serotype O1 (strain ATCC 39315 / El Tor Inaba N16961).